The sequence spans 374 residues: Flap endonuclease 1 (374 aa).

The segment at 1 to 105 is N-domain; it reads MGIKGLTALI…ELLQKRFGRR (105 aa). Asp-34 contacts Mg(2+). Arg-47 and Arg-71 together coordinate DNA. Asp-87 serves as a coordination point for Mg(2+). The interval 103–122 is disordered; the sequence is GRREEAREQEEEQKDVADAE. Residues 123 to 254 form an I-domain region; that stretch reads KMDQLARRQV…KTALKLIREH (132 aa). Residues Glu-159, Glu-161, Asp-180, and Asp-182 each contribute to the Mg(2+) site. Glu-159 lines the DNA pocket. Residues Gly-232 and Asp-234 each coordinate DNA. A Mg(2+)-binding site is contributed by Asp-234. The tract at residues 335-374 is disordered; the sequence is SLSQKQQGRLDGFFTVKPGSAPPKRKAEDDKKNVKKKGKK. The interval 340 to 348 is interaction with PCNA; sequence QQGRLDGFF.

It belongs to the XPG/RAD2 endonuclease family. FEN1 subfamily. As to quaternary structure, interacts with PCNA. Three molecules of FEN1 bind to one PCNA trimer with each molecule binding to one PCNA monomer. PCNA stimulates the nuclease activity without altering cleavage specificity. Mg(2+) is required as a cofactor. Post-translationally, phosphorylated. Phosphorylation upon DNA damage induces relocalization to the nuclear plasma.

Its subcellular location is the nucleus. The protein resides in the nucleolus. It is found in the nucleoplasm. It localises to the mitochondrion. In terms of biological role, structure-specific nuclease with 5'-flap endonuclease and 5'-3' exonuclease activities involved in DNA replication and repair. During DNA replication, cleaves the 5'-overhanging flap structure that is generated by displacement synthesis when DNA polymerase encounters the 5'-end of a downstream Okazaki fragment. It enters the flap from the 5'-end and then tracks to cleave the flap base, leaving a nick for ligation. Also involved in the long patch base excision repair (LP-BER) pathway, by cleaving within the apurinic/apyrimidinic (AP) site-terminated flap. Acts as a genome stabilization factor that prevents flaps from equilibrating into structures that lead to duplications and deletions. Also possesses 5'-3' exonuclease activity on nicked or gapped double-stranded DNA, and exhibits RNase H activity. Also involved in replication and repair of rDNA and in repairing mitochondrial DNA. This chain is Flap endonuclease 1, found in Mycosarcoma maydis (Corn smut fungus).